The chain runs to 554 residues: Hyaluronan synthase 3 (554 aa).

Residues M1 to S15 are Cytoplasmic-facing. The helical transmembrane segment at L16–I36 threads the bilayer. Over H37–S44 the chain is Extracellular. A helical membrane pass occupies residues F45–L65. The Cytoplasmic portion of the chain corresponds to E66–L378. The helical transmembrane segment at W379–I399 threads the bilayer. At Q400 to N409 the chain is on the extracellular side. The chain crosses the membrane as a helical span at residues I410–F430. Residues L431 to S441 are Cytoplasmic-facing. Residues L442 to I462 form a helical membrane-spanning segment. N-linked (GlcNAc...) asparagine glycosylation is present at N463. The Extracellular portion of the chain corresponds to N463–T474. Residues I475–G495 form a helical membrane-spanning segment. Topologically, residues L496–S516 are cytoplasmic. Residues G517–A537 traverse the membrane as a helical segment. The Extracellular segment spans residues R538–V554.

It belongs to the NodC/HAS family. The cofactor is Mg(2+). In terms of processing, O-GlcNAcylation increases the hyaluronan synthase activity, HAS3 stability and its plasma membrane residence. The concentration of UDP-GlcNAc controls the level of O-GlcNAc modification.

It localises to the cell membrane. The protein localises to the golgi apparatus membrane. It is found in the golgi apparatus. The protein resides in the trans-Golgi network membrane. Its subcellular location is the cytoplasmic vesicle. The catalysed reaction is [hyaluronan](n) + UDP-N-acetyl-alpha-D-glucosamine = N-acetyl-beta-D-glucosaminyl-(1-&gt;4)-[hyaluronan](n) + UDP + H(+). It catalyses the reaction N-acetyl-beta-D-glucosaminyl-(1-&gt;4)-[hyaluronan](n) + UDP-alpha-D-glucuronate = [hyaluronan](n+1) + UDP + H(+). It participates in glycan biosynthesis; hyaluronan biosynthesis. Its function is as follows. Catalyzes the addition of GlcNAc or GlcUA monosaccharides to the nascent hyaluronan polymer. Therefore, it is essential to hyaluronan synthesis a major component of most extracellular matrices that has a structural role in tissues architectures and regulates cell adhesion, migration and differentiation. This is one of three isoenzymes responsible for cellular hyaluronan synthesis. This Mus musculus (Mouse) protein is Hyaluronan synthase 3 (Has3).